The following is an 879-amino-acid chain: Band 4.1-like protein 1 (879 aa).

The tract at residues 1 to 88 (MTTETGPDSE…TPSKAQKSPQ (88 aa)) is disordered. The segment covering 17–35 (ETPQQPEAAAAVTTPVTPA) has biased composition (low complexity). Threonine 30 is subject to Phosphothreonine. Residues 38–50 (SHPETNSNEKHLT) show a composition bias toward basic and acidic residues. Position 75 is a phosphoserine (serine 75). A compositionally biased stretch (polar residues) spans 76–87 (ERTTPSKAQKSP). A Phosphothreonine modification is found at threonine 79. The FERM domain occupies 97 to 378 (AICRVTLLDA…EHHTFFRLVS (282 aa)). Residue tyrosine 343 is modified to Phosphotyrosine. Residues serine 378, serine 430, serine 437, serine 461, and serine 466 each carry the phosphoserine modification. Residues 381–482 (PPPKGFLVMG…VRTPTKIKEL (102 aa)) form a hydrophilic region. The disordered stretch occupies residues 428–501 (SRSLDGAEFS…HKQEFLDKPE (74 aa)). The span at 444–501 (ENHDAGPEGDKREDDAESGGRRSEAEEGEVRTPTKIKELKPEQETTPRHKQEFLDKPE) shows a compositional bias: basic and acidic residues. Threonine 475 is modified (phosphothreonine). The tract at residues 483-541 (KPEQETTPRHKQEFLDKPEDVLLKHQASINELKRTLKEPNSKLIHRDRDWDRERRLPSS) is spectrin--actin-binding. A Phosphoserine modification is found at serine 510. A compositionally biased stretch (basic and acidic residues) spans 514-538 (LKRTLKEPNSKLIHRDRDWDRERRL). The interval 514-594 (LKRTLKEPNS…QDQERDAVFL (81 aa)) is disordered. Phosphoserine is present on residues serine 540, serine 541, serine 544, and serine 546. Residue threonine 550 is modified to Phosphothreonine. The span at 550 to 577 (TPEKASERAGLREGSEEKVKPPRPRAPE) shows a compositional bias: basic and acidic residues. A phosphoserine mark is found at serine 564, serine 578, serine 639, serine 648, serine 650, serine 665, serine 666, serine 671, serine 677, and serine 684. The tract at residues 657–696 (FAQDLKGPSSQEDESGGLEDSPDRGACSTPEMPQFESVKA) is disordered. Phosphothreonine is present on threonine 685. Residues serine 721, serine 782, and serine 868 each carry the phosphoserine modification. A C-terminal (CTD) region spans residues 743 to 879 (PCITTETIST…EERDKKPQES (137 aa)).

As to quaternary structure, interacts with AGAP2. Highest expression in brain, also present in kidney, olfactory epithelium, retina, sensory ganglia, gastrointestinal tract (only enteric neurons) and lung.

Its subcellular location is the cytoplasm. It is found in the cytoskeleton. Its function is as follows. May function to confer stability and plasticity to neuronal membrane via multiple interactions, including the spectrin-actin-based cytoskeleton, integral membrane channels and membrane-associated guanylate kinases. The polypeptide is Band 4.1-like protein 1 (Mus musculus (Mouse)).